The chain runs to 2321 residues: Major viral transcription factor ICP4 homolog (2321 aa).

Disordered stretches follow at residues 19–183 (GIFP…SPPL), 296–329 (ILHT…PAPI), 350–438 (EFIQ…PSLG), 954–1180 (MDDD…SGLA), 1360–1392 (DNSS…APPH), 1597–1841 (LLND…PSCY), and 2277–2321 (QHEE…TFTD). Over residues 114 to 147 (SSNRPGGRNSSNGADESGESSSDRSPSYSPCDSY) the composition is skewed to low complexity. Composition is skewed to pro residues over residues 302-329 (PTPP…PAPI) and 355-367 (QSPP…PSPP). Over residues 368 to 389 (AHSSSSCSPSHLAPSPLSSSPL) the composition is skewed to low complexity. Residues 390-410 (SSPPQLSPAPVSPPSSPPPLS) are compositionally biased toward pro residues. Polar residues-rich tracts occupy residues 424–433 (SISSQPQSCP) and 1002–1011 (PRLTTPSSGR). Positions 1031-1093 (PETSPSNEHI…PSSPSSSRSP (63 aa)) are enriched in low complexity. The span at 1151–1161 (GGGRPRGRPPK) shows a compositional bias: basic residues. Composition is skewed to polar residues over residues 1169–1180 (NDIQVTSSSGLA) and 1371–1389 (SKPS…QTTA). Low complexity predominate over residues 1630 to 1644 (STSSSQSASDKSPIK). Polar residues-rich tracts occupy residues 1720-1743 (KAQT…QSSS) and 1801-1816 (VGQT…HDIL). Low complexity predominate over residues 1817–1839 (SSSLPNRSCSSSPSPSKRPYHPS).

The protein belongs to the herpesviridae ICP4 family. In terms of processing, a long stretch of serine residues may be a major site of phosphorylation.

It localises to the host nucleus. Functionally, this IE protein is a multifunctional protein capable of migrating to the nucleus, binding to DNA, trans-activating other viral genes, and autoregulating its own synthesis. It is required for the switch from immediate-early to early mode of gene expression. This chain is Major viral transcription factor ICP4 homolog (MDV084), found in Gallus gallus (Chicken).